Reading from the N-terminus, the 356-residue chain is Phosphate acyltransferase (356 aa).

It belongs to the PlsX family. Homodimer. Probably interacts with PlsY.

Its subcellular location is the cytoplasm. It catalyses the reaction a fatty acyl-[ACP] + phosphate = an acyl phosphate + holo-[ACP]. It functions in the pathway lipid metabolism; phospholipid metabolism. Catalyzes the reversible formation of acyl-phosphate (acyl-PO(4)) from acyl-[acyl-carrier-protein] (acyl-ACP). This enzyme utilizes acyl-ACP as fatty acyl donor, but not acyl-CoA. The polypeptide is Phosphate acyltransferase (Bartonella bacilliformis (strain ATCC 35685 / KC583 / Herrer 020/F12,63)).